The sequence spans 305 residues: UDP-3-O-acyl-N-acetylglucosamine deacetylase (305 aa).

Zn(2+)-binding residues include His78, His237, and Asp241. The Proton donor role is filled by His264.

Belongs to the LpxC family. Zn(2+) serves as cofactor.

The catalysed reaction is a UDP-3-O-[(3R)-3-hydroxyacyl]-N-acetyl-alpha-D-glucosamine + H2O = a UDP-3-O-[(3R)-3-hydroxyacyl]-alpha-D-glucosamine + acetate. Its pathway is glycolipid biosynthesis; lipid IV(A) biosynthesis; lipid IV(A) from (3R)-3-hydroxytetradecanoyl-[acyl-carrier-protein] and UDP-N-acetyl-alpha-D-glucosamine: step 2/6. Catalyzes the hydrolysis of UDP-3-O-myristoyl-N-acetylglucosamine to form UDP-3-O-myristoylglucosamine and acetate, the committed step in lipid A biosynthesis. The protein is UDP-3-O-acyl-N-acetylglucosamine deacetylase of Paraburkholderia phytofirmans (strain DSM 17436 / LMG 22146 / PsJN) (Burkholderia phytofirmans).